Consider the following 119-residue polypeptide: Protein BEX4 (119 aa).

A disordered region spans residues 1 to 53; that stretch reads MESKEELAANNLNGENAQQENEGREQAPTQNEETRHLGGGEGQKPGGNIRRGR. Residues 8–20 show a composition bias toward low complexity; sequence AANNLNGENAQQE. The tract at residues 31-89 is interaction with SIRT2; that stretch reads NEETRHLGGGEGQKPGGNIRRGRVRRLVPNFRWAIPNRHIEHNEARDDVERFVGQMMEI. The tract at residues 31–119 is interaction with alpha-tubulin; the sequence is NEETRHLGGG…DNHYDFCLIP (89 aa). Zn(2+) is bound at residue Cys-116.

This sequence belongs to the BEX family. As to quaternary structure, interacts with alpha-tubulin. Interacts with SIRT2. In terms of processing, ubiquitinated and degraded by the proteasome.

The protein localises to the cytoplasm. The protein resides in the cytoskeleton. It localises to the spindle pole. Its subcellular location is the nucleus. Functionally, may play a role in microtubule deacetylation by negatively regulating the SIRT2 deacetylase activity toward alpha-tubulin and thereby participate in the control of cell cycle progression and genomic stability. In absence of reductive stress, acts as a pseudosubstrate for the CRL2(FEM1B) complex: associates with FEM1B via zinc, thereby preventing association between FEM1B and its substrates. This Pongo abelii (Sumatran orangutan) protein is Protein BEX4.